The primary structure comprises 692 residues: Elongation factor G (692 aa).

The tr-type G domain maps to 8-282 (EKTRNIGIMA…AVIDYLPSPL (275 aa)). Residues 17 to 24 (AHVDAGKT), 81 to 85 (DTPGH), and 135 to 138 (NKMD) each bind GTP.

The protein belongs to the TRAFAC class translation factor GTPase superfamily. Classic translation factor GTPase family. EF-G/EF-2 subfamily.

The protein localises to the cytoplasm. In terms of biological role, catalyzes the GTP-dependent ribosomal translocation step during translation elongation. During this step, the ribosome changes from the pre-translocational (PRE) to the post-translocational (POST) state as the newly formed A-site-bound peptidyl-tRNA and P-site-bound deacylated tRNA move to the P and E sites, respectively. Catalyzes the coordinated movement of the two tRNA molecules, the mRNA and conformational changes in the ribosome. The chain is Elongation factor G from Streptococcus agalactiae serotype Ia (strain ATCC 27591 / A909 / CDC SS700).